Here is a 310-residue protein sequence, read N- to C-terminus: Aspartate carbamoyltransferase catalytic subunit (310 aa).

Carbamoyl phosphate is bound by residues Arg59 and Thr60. Residue Lys87 coordinates L-aspartate. Residues Arg109, His137, and Gln140 each coordinate carbamoyl phosphate. Residues Arg170 and Arg225 each contribute to the L-aspartate site. Carbamoyl phosphate-binding residues include Gly266 and Pro267.

Belongs to the aspartate/ornithine carbamoyltransferase superfamily. ATCase family. As to quaternary structure, heterododecamer (2C3:3R2) of six catalytic PyrB chains organized as two trimers (C3), and six regulatory PyrI chains organized as three dimers (R2).

It catalyses the reaction carbamoyl phosphate + L-aspartate = N-carbamoyl-L-aspartate + phosphate + H(+). Its pathway is pyrimidine metabolism; UMP biosynthesis via de novo pathway; (S)-dihydroorotate from bicarbonate: step 2/3. In terms of biological role, catalyzes the condensation of carbamoyl phosphate and aspartate to form carbamoyl aspartate and inorganic phosphate, the committed step in the de novo pyrimidine nucleotide biosynthesis pathway. This Pelobacter propionicus (strain DSM 2379 / NBRC 103807 / OttBd1) protein is Aspartate carbamoyltransferase catalytic subunit.